The chain runs to 474 residues: tRNA-2-methylthio-N(6)-dimethylallyladenosine synthase (474 aa).

The region spanning 3 to 120 (KKLHIKTWGC…LPEMINHVQE (118 aa)) is the MTTase N-terminal domain. The [4Fe-4S] cluster site is built by Cys-12, Cys-49, Cys-83, Cys-157, Cys-161, and Cys-164. The 233-residue stretch at 143–375 (RAEGPTAFVS…QQRISQQAME (233 aa)) folds into the Radical SAM core domain. The 64-residue stretch at 378-441 (RKMVGTVQRV…ASSLRGILLR (64 aa)) folds into the TRAM domain.

It belongs to the methylthiotransferase family. MiaB subfamily. In terms of assembly, monomer. The cofactor is [4Fe-4S] cluster.

It is found in the cytoplasm. The catalysed reaction is N(6)-dimethylallyladenosine(37) in tRNA + (sulfur carrier)-SH + AH2 + 2 S-adenosyl-L-methionine = 2-methylsulfanyl-N(6)-dimethylallyladenosine(37) in tRNA + (sulfur carrier)-H + 5'-deoxyadenosine + L-methionine + A + S-adenosyl-L-homocysteine + 2 H(+). Functionally, catalyzes the methylthiolation of N6-(dimethylallyl)adenosine (i(6)A), leading to the formation of 2-methylthio-N6-(dimethylallyl)adenosine (ms(2)i(6)A) at position 37 in tRNAs that read codons beginning with uridine. This is tRNA-2-methylthio-N(6)-dimethylallyladenosine synthase from Yersinia pseudotuberculosis serotype O:3 (strain YPIII).